A 145-amino-acid polypeptide reads, in one-letter code: Large ribosomal subunit protein uL13 (145 aa).

The protein belongs to the universal ribosomal protein uL13 family. Part of the 50S ribosomal subunit.

Its function is as follows. This protein is one of the early assembly proteins of the 50S ribosomal subunit, although it is not seen to bind rRNA by itself. It is important during the early stages of 50S assembly. In Bacillus velezensis (strain DSM 23117 / BGSC 10A6 / LMG 26770 / FZB42) (Bacillus amyloliquefaciens subsp. plantarum), this protein is Large ribosomal subunit protein uL13.